The sequence spans 33 residues: Gaegurin-3 (33 aa).

Cysteine 27 and cysteine 33 form a disulfide bridge.

This sequence belongs to the frog skin active peptide (FSAP) family. Brevinin subfamily. As to quaternary structure, monomer. As to expression, expressed by the skin glands.

The protein resides in the secreted. In terms of biological role, has a non-hemolytic activity. Has a broad spectrum of activity against both Gram-positive and Gram-negative bacteria, fungi and protozoa. The chain is Gaegurin-3 (GGN3) from Glandirana rugosa (Japanese wrinkled frog).